The sequence spans 786 residues: LPS-assembly protein LptD (786 aa).

The first 24 residues, 1 to 24 (MSFTSRSLLASFTGCLLYGTPAIA), serve as a signal peptide directing secretion.

Belongs to the LptD family. As to quaternary structure, component of the lipopolysaccharide transport and assembly complex. Interacts with LptE and LptA.

It localises to the cell outer membrane. In terms of biological role, together with LptE, is involved in the assembly of lipopolysaccharide (LPS) at the surface of the outer membrane. This Aliivibrio fischeri (strain ATCC 700601 / ES114) (Vibrio fischeri) protein is LPS-assembly protein LptD.